The sequence spans 37 residues: Cytochrome b6-f complex subunit 5 (37 aa).

A helical membrane pass occupies residues 5-25 (LLSGIVLGLITVSALGLFVAA).

It belongs to the PetG family. In terms of assembly, the 4 large subunits of the cytochrome b6-f complex are cytochrome b6, subunit IV (17 kDa polypeptide, PetD), cytochrome f and the Rieske protein, while the 4 small subunits are PetG, PetL, PetM and PetN. The complex functions as a dimer.

The protein resides in the plastid. Its subcellular location is the chloroplast thylakoid membrane. Component of the cytochrome b6-f complex, which mediates electron transfer between photosystem II (PSII) and photosystem I (PSI), cyclic electron flow around PSI, and state transitions. PetG is required for either the stability or assembly of the cytochrome b6-f complex. This chain is Cytochrome b6-f complex subunit 5, found in Phaeodactylum tricornutum (strain CCAP 1055/1).